The primary structure comprises 464 residues: Cell division protein FtsA (464 aa).

The segment at E392–E464 is disordered. The span at K416 to F455 shows a compositional bias: basic and acidic residues.

Belongs to the FtsA/MreB family. As to quaternary structure, self-interacts. Interacts with FtsZ.

The protein localises to the cell membrane. Functionally, cell division protein that is involved in the assembly of the Z ring. May serve as a membrane anchor for the Z ring. The protein is Cell division protein FtsA of Staphylococcus epidermidis (strain ATCC 12228 / FDA PCI 1200).